A 362-amino-acid chain; its full sequence is MSSGLTLPVWVAAAAKASLHALLGQPFAAQASVSLPDRPAPLLVPVISAARLDGGEQALAISRCDPGPGLDLTRDLEIWVRVSWTPDKQAGLTLLAGAGVGTRGAGGDLCVSAYARDLLERNLLPLDRGLTVEVVLPKGRELALRTSNAAFGVVDGLALIGTQAEVQRSAAPDQLKQVLLDLAQLTGDPEFRGDLILVIGENGLDLARQAQLAPLLKVGNWLGPVLVAAAEAGVQNLLLLGYHGKLIKLAGGIFHTHHHLADGRLEVLTALGFDAGLSLQQLRLLRHAQSVEQAFKALAAVNPAMAEQLGQQLALAVEQRSQAYVARYGDWPMRIGAVLFDRNRHLRWRGPVAGERFFTLMD.

The protein belongs to the CbiD family.

It carries out the reaction Co-precorrin-5B + S-adenosyl-L-methionine = Co-precorrin-6A + S-adenosyl-L-homocysteine. The protein operates within cofactor biosynthesis; adenosylcobalamin biosynthesis; cob(II)yrinate a,c-diamide from sirohydrochlorin (anaerobic route): step 6/10. Catalyzes the methylation of C-1 in cobalt-precorrin-5B to form cobalt-precorrin-6A. This Synechococcus sp. (strain CC9902) protein is Cobalt-precorrin-5B C(1)-methyltransferase.